A 495-amino-acid chain; its full sequence is Myocyte-specific enhancer factor 2A (495 aa).

The 55-residue stretch at 3–57 (RKKIQITRIMDERNRQVTFTKRKFGLMKKAYELSVLCDCEIALIIFNSSNKLFQY) folds into the MADS-box domain. Residues 58 to 86 (ASTDMDKVLLKYTEYNEPHESRTNSDIVE) constitute a DNA-binding region (mef2-type). The residue at position 59 (Ser-59) is a Phosphoserine; by CK2. Residue Ser-98 is modified to Phosphoserine. Positions 175 to 225 (AESSMLSPPPATLHRNVSPGAPQRPPSTGSAGGMLSTTDLTVPNGAGNGPV) are disordered. Ser-235 carries the post-translational modification Phosphoserine. The segment at 242–271 (TGANSVGKVMPTKSPPPPGGGSVGMNSRKP) is disordered. At Lys-249 the chain carries N6-acetyllysine. Ser-255 bears the Phosphoserine mark. Residues 266-283 (MNSRKPDLRVVIPPSSKG) are required for interaction with MAPKs. Phosphothreonine; by MAPK7 and MAPK14 occurs at positions 304 and 311. Ser-347 is modified (phosphoserine; by MAPK7). A compositionally biased stretch (polar residues) spans 382–394 (SNLSINTNQNINI). Positions 382-495 (SNLSINTNQN…KRMRMDTWVT (114 aa)) are disordered. Position 395 is an N6-acetyllysine; alternate (Lys-395). A Glycyl lysine isopeptide (Lys-Gly) (interchain with G-Cter in SUMO); alternate cross-link involves residue Lys-395. The residue at position 400 (Ser-400) is a Phosphoserine; by CDK5. A Phosphothreonine modification is found at Thr-407. Residues 421–433 (QQPPPQPPQPQPQ) show a composition bias toward pro residues. The residue at position 441 (Ser-441) is a Phosphoserine. Residues 441-454 (SPVDSLSSSSSSYD) show a composition bias toward low complexity. Basic and acidic residues-rich tracts occupy residues 455–465 (GSDREDPRGDF) and 476–495 (NAED…TWVT).

As to quaternary structure, binds DNA as a homo- or heterodimer. Dimerizes with MEF2D. Interacts with HDAC7. Interacts with PIAS1; the interaction enhances sumoylation. Interacts with HDAC4, HDAC9 and SLC2A4RG. Interacts (via the N-terminal) with MAPK7; the interaction results in the phosphorylation and transcriptional activity of MEF2A. Post-translationally, constitutive phosphorylation on Ser-400 promotes Lys-395 sumoylation thus preventing acetylation at this site. Dephosphorylation on Ser-400 by PPP3CA upon neuron depolarization promotes a switch from sumoylation to acetylation on residue Lys-395 leading to inhibition of dendrite claw differentiation. Phosphorylation on Thr-304 and Thr-311 are the main sites involved in p38 MAPK signaling and activate transcription. Phosphorylated on these sites by MAPK14/p38alpha and MAPK11/p38beta, but not by MAPK13/p38delta nor by MAPK12/p38gamma. Phosphorylation on Ser-400 by CDK5 induced by neurotoxicity inhibits MEF2A transcriptional activation leading to apoptosis of cortical neurons. Phosphorylation on Thr-304, Thr-311 and Ser-347 can be induced by EGF. Sumoylation on Lys-395 is enhanced by PIAS1 and represses transcriptional activity. Phosphorylation on Ser-400 is required for sumoylation. Has no effect on nuclear location nor on DNA binding. Sumoylated with SUMO1 and, to a lesser extent with SUMO2 and SUMO3. PIASx facilitates sumoylation in postsynaptic dendrites in the cerebellar cortex and promotes their morphogenesis. In terms of processing, acetylation on Lys-395 activates transcriptional activity. Acetylated by p300 on several sites in diffentiating myocytes. Acetylation on Lys-4 increases DNA binding and transactivation. Hyperacetylation by p300 leads to enhanced cardiac myocyte growth and heart failure. Post-translationally, proteolytically cleaved in cerebellar granule neurons on several sites by caspase 3 and caspase 7 following neurotoxicity. Preferentially cleaves the CDK5-mediated hyperphosphorylated form which leads to neuron apoptosis and transcriptional inactivation.

It is found in the nucleus. Its function is as follows. Transcriptional activator which binds specifically to the MEF2 element, 5'-YTA[AT](4)TAR-3', found in numerous muscle-specific genes. Also involved in the activation of numerous growth factor- and stress-induced genes. Mediates cellular functions not only in skeletal and cardiac muscle development, but also in neuronal differentiation and survival. Plays diverse roles in the control of cell growth, survival and apoptosis via p38 MAPK signaling in muscle-specific and/or growth factor-related transcription. In cerebellar granule neurons, phosphorylated and sumoylated MEF2A represses transcription of NUR77 promoting synaptic differentiation. Associates with chromatin to the ZNF16 promoter. The polypeptide is Myocyte-specific enhancer factor 2A (Mef2a) (Rattus norvegicus (Rat)).